Reading from the N-terminus, the 35-residue chain is Toxin Ado1 (35 aa).

Cystine bridges form between Cys5–Cys20, Cys12–Cys25, and Cys19–Cys32.

The protein localises to the secreted. Functionally, binds reversibly and blocks P/Q-type voltage-gated calcium channels (Cav). In Agriosphodrus dohrni (Japanese assassin-bug), this protein is Toxin Ado1.